We begin with the raw amino-acid sequence, 379 residues long: Ribosomal RNA small subunit methyltransferase H (379 aa).

S-adenosyl-L-methionine contacts are provided by residues 71–73 (GGH), glutamate 90, aspartate 157, and histidine 164.

This sequence belongs to the methyltransferase superfamily. RsmH family.

The protein localises to the cytoplasm. The enzyme catalyses cytidine(1402) in 16S rRNA + S-adenosyl-L-methionine = N(4)-methylcytidine(1402) in 16S rRNA + S-adenosyl-L-homocysteine + H(+). In terms of biological role, specifically methylates the N4 position of cytidine in position 1402 (C1402) of 16S rRNA. This chain is Ribosomal RNA small subunit methyltransferase H, found in Treponema pallidum (strain Nichols).